The primary structure comprises 511 residues: Small ribosomal subunit protein uS4m (511 aa).

The S4 RNA-binding domain occupies 202–272 (KRLDVVLYRS…IKNNLFSNIN (71 aa)).

It belongs to the universal ribosomal protein uS4 family.

The protein resides in the mitochondrion. The chain is Small ribosomal subunit protein uS4m (RPS4) from Prototheca wickerhamii.